We begin with the raw amino-acid sequence, 301 residues long: Ribosomal RNA small subunit methyltransferase H (301 aa).

Residues 31-33, D49, F76, D97, and Q104 contribute to the S-adenosyl-L-methionine site; that span reads GGY.

Belongs to the methyltransferase superfamily. RsmH family.

It localises to the cytoplasm. The enzyme catalyses cytidine(1402) in 16S rRNA + S-adenosyl-L-methionine = N(4)-methylcytidine(1402) in 16S rRNA + S-adenosyl-L-homocysteine + H(+). Specifically methylates the N4 position of cytidine in position 1402 (C1402) of 16S rRNA. The chain is Ribosomal RNA small subunit methyltransferase H from Ehrlichia ruminantium (strain Welgevonden).